A 785-amino-acid chain; its full sequence is Uncoating factor OPG117 (785 aa).

The active site involves D170. The segment at 342 to 469 (TERGDHIVWI…ELINIINDIQ (128 aa)) is primase. The SF3 helicase domain occupies 477–639 (KNRELYEKTL…FSQPSGREAA (163 aa)). 503-510 (GETATGKS) contacts ATP.

Belongs to the orthopoxvirus OPG117 family. As to quaternary structure, homomultimer; hexamer. Interacts with OPG148.

Its subcellular location is the host cytoplasm. In terms of biological role, multifunctional protein required for genome uncoating and replication. Major viral uncoating protein that is required for the release of the viral genome from incoming viral cores containing the viral DNA genome. Possesses an ATPase activity that is required for hexamerization and uncoating. The chain is Uncoating factor OPG117 (OPG117) from Variola virus (isolate Human/India/Ind3/1967) (VARV).